Reading from the N-terminus, the 457-residue chain is Multidrug resistance protein MdtK (457 aa).

12 helical membrane passes run 11–31, 53–73, 93–113, 127–147, 160–180, 189–209, 243–263, 276–296, 314–334, 350–370, 387–407, and 418–438; these read LLAL…MGFV, IWLP…PVIA, WLAG…GYII, AVGY…FQVA, GMVM…IFIY, GGVG…LAMV, LPIA…ALLV, IALN…AAVT, AART…IFTV, VVTL…SDSI, IFYI…YILA, and PAGF…MMML.

Belongs to the multi antimicrobial extrusion (MATE) (TC 2.A.66.1) family. MdtK subfamily.

It is found in the cell inner membrane. Its function is as follows. Multidrug efflux pump that functions probably as a Na(+)/drug antiporter. This Escherichia coli O9:H4 (strain HS) protein is Multidrug resistance protein MdtK.